A 95-amino-acid chain; its full sequence is Protein TusB (95 aa).

The protein belongs to the DsrH/TusB family. As to quaternary structure, heterohexamer, formed by a dimer of trimers. The hexameric TusBCD complex contains 2 copies each of TusB, TusC and TusD. The TusBCD complex interacts with TusE.

The protein resides in the cytoplasm. In terms of biological role, part of a sulfur-relay system required for 2-thiolation of 5-methylaminomethyl-2-thiouridine (mnm(5)s(2)U) at tRNA wobble positions. This is Protein TusB from Pectobacterium carotovorum subsp. carotovorum (strain PC1).